The following is an 82-amino-acid chain: MPLFKFAIDVQYRSNVRDPRGETIERVLREEKGLPVKKLRLGKSIHLEVEAENKEKAYEIVKKACEELLVNPVVEEYEVREL.

Belongs to the PurS family. As to quaternary structure, homodimer. Part of the FGAM synthase complex composed of 1 PurL, 1 PurQ and 2 PurS subunits.

It localises to the cytoplasm. It carries out the reaction N(2)-formyl-N(1)-(5-phospho-beta-D-ribosyl)glycinamide + L-glutamine + ATP + H2O = 2-formamido-N(1)-(5-O-phospho-beta-D-ribosyl)acetamidine + L-glutamate + ADP + phosphate + H(+). The protein operates within purine metabolism; IMP biosynthesis via de novo pathway; 5-amino-1-(5-phospho-D-ribosyl)imidazole from N(2)-formyl-N(1)-(5-phospho-D-ribosyl)glycinamide: step 1/2. Functionally, part of the phosphoribosylformylglycinamidine synthase complex involved in the purines biosynthetic pathway. Catalyzes the ATP-dependent conversion of formylglycinamide ribonucleotide (FGAR) and glutamine to yield formylglycinamidine ribonucleotide (FGAM) and glutamate. The FGAM synthase complex is composed of three subunits. PurQ produces an ammonia molecule by converting glutamine to glutamate. PurL transfers the ammonia molecule to FGAR to form FGAM in an ATP-dependent manner. PurS interacts with PurQ and PurL and is thought to assist in the transfer of the ammonia molecule from PurQ to PurL. The protein is Phosphoribosylformylglycinamidine synthase subunit PurS of Thermotoga maritima (strain ATCC 43589 / DSM 3109 / JCM 10099 / NBRC 100826 / MSB8).